Here is a 151-residue protein sequence, read N- to C-terminus: Transcriptional regulator MraZ (151 aa).

2 SpoVT-AbrB domains span residues 5 to 51 (AHEL…PVAE) and 81 to 124 (AEIL…GREQ).

The protein belongs to the MraZ family. In terms of assembly, forms oligomers.

The protein resides in the cytoplasm. It is found in the nucleoid. In Neisseria meningitidis serogroup C / serotype 2a (strain ATCC 700532 / DSM 15464 / FAM18), this protein is Transcriptional regulator MraZ.